Consider the following 231-residue polypeptide: LexA repressor (231 aa).

The H-T-H motif DNA-binding region spans 26-46 (FDEMKDALDLRSKSGIHRLIT). Catalysis depends on for autocatalytic cleavage activity residues Ser152 and Lys190.

This sequence belongs to the peptidase S24 family. Homodimer.

It carries out the reaction Hydrolysis of Ala-|-Gly bond in repressor LexA.. Represses a number of genes involved in the response to DNA damage (SOS response), including recA and lexA. In the presence of single-stranded DNA, RecA interacts with LexA causing an autocatalytic cleavage which disrupts the DNA-binding part of LexA, leading to derepression of the SOS regulon and eventually DNA repair. This is LexA repressor from Dinoroseobacter shibae (strain DSM 16493 / NCIMB 14021 / DFL 12).